We begin with the raw amino-acid sequence, 192 residues long: Large ribosomal subunit protein uL5 (192 aa).

Belongs to the universal ribosomal protein uL5 family. In terms of assembly, part of the 50S ribosomal subunit; part of the 5S rRNA/L5/L18/L25 subcomplex. Contacts the 5S rRNA and the P site tRNA. Forms a bridge to the 30S subunit in the 70S ribosome.

Functionally, this is one of the proteins that bind and probably mediate the attachment of the 5S RNA into the large ribosomal subunit, where it forms part of the central protuberance. In the 70S ribosome it contacts protein S13 of the 30S subunit (bridge B1b), connecting the 2 subunits; this bridge is implicated in subunit movement. Contacts the P site tRNA; the 5S rRNA and some of its associated proteins might help stabilize positioning of ribosome-bound tRNAs. This Mesorhizobium japonicum (strain LMG 29417 / CECT 9101 / MAFF 303099) (Mesorhizobium loti (strain MAFF 303099)) protein is Large ribosomal subunit protein uL5.